The sequence spans 138 residues: MAALPDKEKLLRNFTRCANWEEKYLYIIELGQRLAELNPQDRNPQNTIHGCQSQVWIVMRRNANGIIELQGDSDAAIVKGLMAVVFILYHQMTAQDIVHFDVRPWFEKMALTQHLTPSRSQGLEAMIRAIRAKAATLS.

Cysteine 51 functions as the Cysteine persulfide intermediate in the catalytic mechanism.

Belongs to the SufE family. Homodimer. Interacts with SufS.

Its subcellular location is the cytoplasm. Its pathway is cofactor biosynthesis; iron-sulfur cluster biosynthesis. Participates in cysteine desulfuration mediated by SufS. Cysteine desulfuration mobilizes sulfur from L-cysteine to yield L-alanine and constitutes an essential step in sulfur metabolism for biosynthesis of a variety of sulfur-containing biomolecules. Functions as a sulfur acceptor for SufS, by mediating the direct transfer of the sulfur atom from the S-sulfanylcysteine of SufS, an intermediate product of cysteine desulfuration process. This is Cysteine desulfuration protein SufE from Salmonella agona (strain SL483).